A 159-amino-acid chain; its full sequence is NAD(P)H-quinone oxidoreductase subunit J, chloroplastic (159 aa).

It belongs to the complex I 30 kDa subunit family. As to quaternary structure, NDH is composed of at least 16 different subunits, 5 of which are encoded in the nucleus.

It is found in the plastid. It localises to the chloroplast thylakoid membrane. It carries out the reaction a plastoquinone + NADH + (n+1) H(+)(in) = a plastoquinol + NAD(+) + n H(+)(out). It catalyses the reaction a plastoquinone + NADPH + (n+1) H(+)(in) = a plastoquinol + NADP(+) + n H(+)(out). Its function is as follows. NDH shuttles electrons from NAD(P)H:plastoquinone, via FMN and iron-sulfur (Fe-S) centers, to quinones in the photosynthetic chain and possibly in a chloroplast respiratory chain. The immediate electron acceptor for the enzyme in this species is believed to be plastoquinone. Couples the redox reaction to proton translocation, and thus conserves the redox energy in a proton gradient. The chain is NAD(P)H-quinone oxidoreductase subunit J, chloroplastic from Populus trichocarpa (Western balsam poplar).